Consider the following 1489-residue polypeptide: MIERGKFRSLTLINWNGFFARTFDLDELVTTLSGGNGAGKSTTMAAFVTALIPDLTLLHFRNTTEAGATSGSRDKGLHGKLKAGVCYSMLDVLNSRHQRVVVGVRLQQVAGRDRKVDIKPFAIQGLPMSVQPTQLVTETLNERQARVLTLAELKEKLDAMEGVQFKQFNSITDYHSLMFDLGIIARRLRSASDRSKFYRLIEASLYGGISSAITRSLRDYLLPENSGVRKAFQDMEAALRENRMTLEAIRVTQSDRDLFKHLISEATNYVAADYMRHANERRVHLDKALEFRRELYTSRKQLAAEQYKHVDMARELGEHNGAEGDLEADYQAASDHLNLVQTALRQQEKIERYEADLDELQIRLEEQNEVVAEAADMQEENEARAEAAELEVDELKSQLADYQQALDVQQTRAIQYNQAIQALDRAKALCHLPDLTADSAAEWLETFQAKEQEATEKLLSLEQKMSVAQTAHSQFEQAYQLVAAINGPLARNEAWSVARDLLREGVEQRHLAEQVQPLRMRLSELEQRLREQQEAERLLAEFCKRQGKHFDIDELEALHQELEARIAALSDSVSNAHEQRMTLRQEQEQLQSRIQHLMQRAPIWLAAQNSLNQLCEQSGEEFTSSQDVTEYLQQLLEREREAIVERDEVGARKNAVDEEIERLSQPGGSEDSRLNALAERFGGVLLSEIYDDVSFEDAPYFSALYGPSRHAIVVPDLSLIAEQLEGLTDCPEDLYFIEGDPQSFDDSVFSVDELENAVVVKTAERQWRYSRFPTVPIFGRAARENRIESLHAEREGLSERFATLSFDVQKTQRLHQAFSRFIGSHLAVAFEADPEAEIRQLNGRRVELERALATHENDNQQQRIQFEQAKEGVSALNRLLPRLNLLADDTLADRVDEIQERLDDAQEAARFIQQHGNQLAKLEPIVSVLQNDPEQFEQLKEDYAYSQQTQRDARQQAFALTEVVQRRAHFSYSDSAEMLSGNSDLNEKLRQRLEQAEAERTRAREALRGHAAQLSQYNQVLASLKSSYDTKKELLGDLQRELQDIGVRADSGSEERARIRRDELHTQLSNNRSRRNQLEKALTFCEAEMDNLTRRLRKLERDYHEMREQVVTAKAGWCAVMRMVKDNGVERRLHRRELAYLSADELRSMSDKALGALRLAVADNEHLRDVLRMSEDPKRPERKIQFFVAVYQHLRERIRQDIIRTDDPVEAIEQMEIELSRLTEELTSREQKLAISSRSVANIIRKTIQREQNRIRMLNQGLQNVSFGQVNSVRLNVNVRETHATLLDVLSEQHEQHQDLFNSNRLTFSEALAKLYQRLNPQIDMGQRTPQTIGEELLDYRNYLEMEVEVNRGSDGWLRAESGALSTGEAIGTGMSILVMVVQSWEDEGRRLRGKDISPCRLLFLDEAARLDARSIATLFELCERLQMQLIIAAPENISPEKGTTYKLVRKVFHNTEHVHVVGLRGFAPQLSETLPGTGTEDASSQAAG.

ATP is bound at residue 34–41 (GGNGAGKS). Coiled coils occupy residues 326-418 (LEAD…QYNQ), 444-472 (LETFQAKEQEATEKLLSLEQKMSVAQTAH), 509-602 (RHLA…QRAP), 780-805 (RAARENRIESLHAEREGLSERFATLS), 835-919 (EAEI…GNQL), 977-1116 (EMLS…AKAG), and 1209-1266 (VEAI…QNVS). The flexible hinge stretch occupies residues 666–783 (PGGSEDSRLN…TVPIFGRAAR (118 aa)).

This sequence belongs to the SMC family. MukB subfamily. As to quaternary structure, homodimerization via its hinge domain. Binds to DNA via its C-terminal region. Interacts, and probably forms a ternary complex, with MukE and MukF via its C-terminal region. The complex formation is stimulated by calcium or magnesium. Interacts with tubulin-related protein FtsZ.

The protein resides in the cytoplasm. Its subcellular location is the nucleoid. Plays a central role in chromosome condensation, segregation and cell cycle progression. Functions as a homodimer, which is essential for chromosome partition. Involved in negative DNA supercoiling in vivo, and by this means organize and compact chromosomes. May achieve or facilitate chromosome segregation by condensation DNA from both sides of a centrally located replisome during cell division. This Citrobacter koseri (strain ATCC BAA-895 / CDC 4225-83 / SGSC4696) protein is Chromosome partition protein MukB.